The chain runs to 145 residues: uncharacterized protein (145 aa).

The N-terminal stretch at 1–23 (MSSSNLSSRKTRISAHFLDAAPA) is a signal peptide. The chain crosses the membrane as a helical span at residues 123–140 (VLLLIIALVFLLFVAIFI).

It is found in the membrane. This is an uncharacterized protein from Archaeoglobus fulgidus (strain ATCC 49558 / DSM 4304 / JCM 9628 / NBRC 100126 / VC-16).